Here is a 90-residue protein sequence, read N- to C-terminus: Probable Fe(2+)-trafficking protein (90 aa).

The protein belongs to the Fe(2+)-trafficking protein family.

In terms of biological role, could be a mediator in iron transactions between iron acquisition and iron-requiring processes, such as synthesis and/or repair of Fe-S clusters in biosynthetic enzymes. This is Probable Fe(2+)-trafficking protein from Nitrosospira multiformis (strain ATCC 25196 / NCIMB 11849 / C 71).